Reading from the N-terminus, the 824-residue chain is Glycerol-3-phosphate acyltransferase (824 aa).

Positions 302–307 match the HXXXXD motif motif; it reads CHRSHM.

Belongs to the GPAT/DAPAT family.

The protein localises to the cell inner membrane. The enzyme catalyses sn-glycerol 3-phosphate + an acyl-CoA = a 1-acyl-sn-glycero-3-phosphate + CoA. It functions in the pathway phospholipid metabolism; CDP-diacylglycerol biosynthesis; CDP-diacylglycerol from sn-glycerol 3-phosphate: step 1/3. This Actinobacillus pleuropneumoniae serotype 5b (strain L20) protein is Glycerol-3-phosphate acyltransferase.